We begin with the raw amino-acid sequence, 296 residues long: Factor associated with metabolism and energy (296 aa).

The N-myristoyl glycine moiety is linked to residue G2. Composition is skewed to basic and acidic residues over residues 173–187 (SLHG…SPRD) and 267–281 (EQGK…LVRT). 2 disordered regions span residues 173–204 (SLHG…DDHD) and 256–281 (LLWD…LVRT).

It localises to the cell membrane. It is found in the cytoplasmic vesicle. Functionally, may be involved in tuning the metabolism, energy expenditure, and excretion processes. The protein is Factor associated with metabolism and energy of Homo sapiens (Human).